Here is a 158-residue protein sequence, read N- to C-terminus: Transcriptional repressor NrdR (158 aa).

The segment at 3–34 is a zinc-finger region; it reads CPFCGSLDTQVIDSRANEAGDAIRRRRRCAAC. An ATP-cone domain is found at 49–139; sequence PQIVKTNGTR…VYKSFKDPDD (91 aa).

Belongs to the NrdR family. Zn(2+) is required as a cofactor.

Its function is as follows. Negatively regulates transcription of bacterial ribonucleotide reductase nrd genes and operons by binding to NrdR-boxes. The sequence is that of Transcriptional repressor NrdR from Thiobacillus denitrificans (strain ATCC 25259 / T1).